A 211-amino-acid chain; its full sequence is Mitotic spindle assembly checkpoint protein MAD2B (211 aa).

The HORMA domain occupies 13-203 (QVVADILCEF…SDILKMQLYV (191 aa)).

As to quaternary structure, homooligomer. Interacts with rev1. Interacts with rev3l. Interacts with fzr1 (in complex with the anaphase promoting complex APC). May interact with cdc20.

The protein resides in the nucleus. The protein localises to the cytoplasm. It is found in the cytoskeleton. It localises to the spindle. Its function is as follows. Adapter protein able to interact with different proteins and involved in different biological processes. Mediates the interaction between the error-prone DNA polymerase zeta catalytic subunit rev3l and the inserter polymerase rev1, thereby mediating the second polymerase switching in translesion DNA synthesis. Translesion DNA synthesis releases the replication blockade of replicative polymerases, stalled in presence of DNA lesions. May also play a role in signal transduction in response to DNA damage. May regulate the activation of the anaphase promoting complex APC thereby regulating progression through the cell cycle. Through transcriptional regulation may play a role in epithelial-mesenchymal transdifferentiation. This is Mitotic spindle assembly checkpoint protein MAD2B (mad2l2) from Danio rerio (Zebrafish).